Consider the following 444-residue polypeptide: Phosphoglucosamine mutase (444 aa).

S102 acts as the Phosphoserine intermediate in catalysis. 4 residues coordinate Mg(2+): S102, D241, D243, and D245. Position 102 is a phosphoserine (S102).

This sequence belongs to the phosphohexose mutase family. Requires Mg(2+) as cofactor. Post-translationally, activated by phosphorylation.

The enzyme catalyses alpha-D-glucosamine 1-phosphate = D-glucosamine 6-phosphate. Catalyzes the conversion of glucosamine-6-phosphate to glucosamine-1-phosphate. The sequence is that of Phosphoglucosamine mutase from Erwinia tasmaniensis (strain DSM 17950 / CFBP 7177 / CIP 109463 / NCPPB 4357 / Et1/99).